Consider the following 787-residue polypeptide: LPS-assembly protein LptD (787 aa).

The segment at 1–78 is disordered; it reads MAAGLPPLVV…AAGAAPAESG (78 aa). The span at 59 to 78 shows a compositional bias: low complexity; it reads LPPVGTPAEPAAGAAPAESG.

The protein belongs to the LptD family. Component of the lipopolysaccharide transport and assembly complex. Interacts with LptE and LptA.

In terms of biological role, together with LptE, is involved in the assembly of lipopolysaccharide (LPS) at the surface of the outer membrane. The chain is LPS-assembly protein LptD from Aromatoleum aromaticum (strain DSM 19018 / LMG 30748 / EbN1) (Azoarcus sp. (strain EbN1)).